The following is a 393-amino-acid chain: NAD(P)H-quinone oxidoreductase subunit H, chloroplastic (393 aa).

It belongs to the complex I 49 kDa subunit family. As to quaternary structure, NDH is composed of at least 16 different subunits, 5 of which are encoded in the nucleus.

The protein localises to the plastid. Its subcellular location is the chloroplast thylakoid membrane. It catalyses the reaction a plastoquinone + NADH + (n+1) H(+)(in) = a plastoquinol + NAD(+) + n H(+)(out). The catalysed reaction is a plastoquinone + NADPH + (n+1) H(+)(in) = a plastoquinol + NADP(+) + n H(+)(out). NDH shuttles electrons from NAD(P)H:plastoquinone, via FMN and iron-sulfur (Fe-S) centers, to quinones in the photosynthetic chain and possibly in a chloroplast respiratory chain. The immediate electron acceptor for the enzyme in this species is believed to be plastoquinone. Couples the redox reaction to proton translocation, and thus conserves the redox energy in a proton gradient. This is NAD(P)H-quinone oxidoreductase subunit H, chloroplastic from Chlorokybus atmophyticus (Soil alga).